The primary structure comprises 327 residues: Flotillin-like protein FloA (327 aa).

The chain crosses the membrane as a helical span at residues 7-27; that stretch reads FLVPILIVILLLVFFSLVPVG.

This sequence belongs to the flotillin-like FloA family. In terms of assembly, homooligomerizes.

It localises to the cell membrane. The protein localises to the membrane raft. Its function is as follows. Found in functional membrane microdomains (FMM) that may be equivalent to eukaryotic membrane rafts. FMMs are highly dynamic and increase in number as cells age. Flotillins are thought to be important factors in membrane fluidity. The protein is Flotillin-like protein FloA of Finegoldia magna (strain ATCC 29328 / DSM 20472 / WAL 2508) (Peptostreptococcus magnus).